We begin with the raw amino-acid sequence, 100 residues long: Urease subunit gamma (100 aa).

Belongs to the urease gamma subunit family. Heterotrimer of UreA (gamma), UreB (beta) and UreC (alpha) subunits. Three heterotrimers associate to form the active enzyme.

Its subcellular location is the cytoplasm. The enzyme catalyses urea + 2 H2O + H(+) = hydrogencarbonate + 2 NH4(+). Its pathway is nitrogen metabolism; urea degradation; CO(2) and NH(3) from urea (urease route): step 1/1. This Marinomonas sp. (strain MWYL1) protein is Urease subunit gamma.